A 225-amino-acid polypeptide reads, in one-letter code: Putative ankyrin repeat protein RBE_1025 (225 aa).

ANK repeat units lie at residues 6–35, 41–71, 75–120, and 124–153; these read LSKD…AINP, NGKT…NVNI, TGFT…DVNI, and KGNT…SPFI.

The protein is Putative ankyrin repeat protein RBE_1025 of Rickettsia bellii (strain RML369-C).